A 408-amino-acid chain; its full sequence is Putative glutamate--cysteine ligase 2 (408 aa).

Belongs to the glutamate--cysteine ligase type 2 family. YbdK subfamily.

It carries out the reaction L-cysteine + L-glutamate + ATP = gamma-L-glutamyl-L-cysteine + ADP + phosphate + H(+). In terms of biological role, ATP-dependent carboxylate-amine ligase which exhibits weak glutamate--cysteine ligase activity. The sequence is that of Putative glutamate--cysteine ligase 2 from Bradyrhizobium sp. (strain BTAi1 / ATCC BAA-1182).